The primary structure comprises 384 residues: Alanine racemase (384 aa).

The active-site Proton acceptor; specific for D-alanine is the K42. Residue K42 is modified to N6-(pyridoxal phosphate)lysine. R140 contacts substrate. Y271 functions as the Proton acceptor; specific for L-alanine in the catalytic mechanism. M319 provides a ligand contact to substrate.

This sequence belongs to the alanine racemase family. As to quaternary structure, homodimer. Pyridoxal 5'-phosphate is required as a cofactor.

The enzyme catalyses L-alanine = D-alanine. Its pathway is amino-acid biosynthesis; D-alanine biosynthesis; D-alanine from L-alanine: step 1/1. Catalyzes the interconversion of L-alanine and D-alanine. This is Alanine racemase (alr) from Mycobacterium tuberculosis (strain CDC 1551 / Oshkosh).